The primary structure comprises 566 residues: Amidophosphoribosyltransferase 1, chloroplastic (566 aa).

A compositionally biased stretch (low complexity) spans 1-13 (MAATTSFSSSLSL). Disordered stretches follow at residues 1 to 28 (MAAT…QPLP) and 58 to 87 (VSSY…DEKP). Residues 1–58 (MAATTSFSSSLSLITKPNNSSYTNQPLPLFPKPFLKPPHLSLLPSPLSSPPPSLIHGV) constitute a chloroplast transit peptide. Positions 15-25 (TKPNNSSYTNQ) are enriched in polar residues. Positions 59-68 (SSYFSSPSPS) are enriched in low complexity. A compositionally biased stretch (basic and acidic residues) spans 70–87 (DNSHTPFDYHNDEDDEKP). The active-site Nucleophile is cysteine 91. The region spanning 91–311 (CGVVGIYGDP…PGEVLVVDKD (221 aa)) is the Glutamine amidotransferase type-2 domain. 4 residues coordinate [4Fe-4S] cluster: cysteine 327, cysteine 473, cysteine 524, and cysteine 527.

It in the C-terminal section; belongs to the purine/pyrimidine phosphoribosyltransferase family. [4Fe-4S] cluster serves as cofactor. Requires Mg(2+) as cofactor. As to expression, expressed in flowers and roots. Also present in leaves, and, to a lower extent, in cotyledons.

Its subcellular location is the plastid. It is found in the chloroplast stroma. The enzyme catalyses 5-phospho-beta-D-ribosylamine + L-glutamate + diphosphate = 5-phospho-alpha-D-ribose 1-diphosphate + L-glutamine + H2O. It participates in purine metabolism; IMP biosynthesis via de novo pathway; N(1)-(5-phospho-D-ribosyl)glycinamide from 5-phospho-alpha-D-ribose 1-diphosphate: step 1/2. Catalyzes the first committed step of 'de novo' purine biosynthesis from glutamine. Involved in plastid biogenesis and cell division. The protein is Amidophosphoribosyltransferase 1, chloroplastic (ASE1) of Arabidopsis thaliana (Mouse-ear cress).